A 594-amino-acid polypeptide reads, in one-letter code: UvrABC system protein C (594 aa).

The 78-residue stretch at 14 to 91 (DQPGCYLMKD…IKKYDPKYNI (78 aa)) folds into the GIY-YIG domain. The UVR domain occupies 196–231 (KEVRSELEIKMYEASEKLEFERAKELRDQIAHIDAI).

Belongs to the UvrC family. In terms of assembly, interacts with UvrB in an incision complex.

The protein resides in the cytoplasm. The UvrABC repair system catalyzes the recognition and processing of DNA lesions. UvrC both incises the 5' and 3' sides of the lesion. The N-terminal half is responsible for the 3' incision and the C-terminal half is responsible for the 5' incision. This chain is UvrABC system protein C, found in Bacillus cereus (strain G9842).